Here is a 349-residue protein sequence, read N- to C-terminus: Fructose-1,6-bisphosphatase class 1 (349 aa).

Mg(2+)-binding residues include Glu-113, Asp-135, Ile-137, and Asp-138. Substrate is bound by residues 138–141 (DGSS), Asn-230, Tyr-258, and Lys-288. Glu-294 is a binding site for Mg(2+).

This sequence belongs to the FBPase class 1 family. Homotetramer. Mg(2+) serves as cofactor.

It is found in the cytoplasm. The catalysed reaction is beta-D-fructose 1,6-bisphosphate + H2O = beta-D-fructose 6-phosphate + phosphate. The protein operates within carbohydrate biosynthesis; Calvin cycle. This Trichormus variabilis (strain ATCC 29413 / PCC 7937) (Anabaena variabilis) protein is Fructose-1,6-bisphosphatase class 1.